Reading from the N-terminus, the 208-residue chain is Holliday junction branch migration complex subunit RuvA (208 aa).

Positions 1–64 (MIGKLKGIVD…EDMIRLYGFR (64 aa)) are domain I. The interval 65 to 143 (VDAEREWFRL…AFAPIDPALI (79 aa)) is domain II. The flexible linker stretch occupies residues 144–152 (ALTGAVEDR). Residues 153 to 208 (TAPQPVADAISALVNLGYAQIQASAAIAAALKGLGEEAGTVEAKTLIRLGLRELAR) are domain III.

The protein belongs to the RuvA family. As to quaternary structure, homotetramer. Forms an RuvA(8)-RuvB(12)-Holliday junction (HJ) complex. HJ DNA is sandwiched between 2 RuvA tetramers; dsDNA enters through RuvA and exits via RuvB. An RuvB hexamer assembles on each DNA strand where it exits the tetramer. Each RuvB hexamer is contacted by two RuvA subunits (via domain III) on 2 adjacent RuvB subunits; this complex drives branch migration. In the full resolvosome a probable DNA-RuvA(4)-RuvB(12)-RuvC(2) complex forms which resolves the HJ.

The protein localises to the cytoplasm. Its function is as follows. The RuvA-RuvB-RuvC complex processes Holliday junction (HJ) DNA during genetic recombination and DNA repair, while the RuvA-RuvB complex plays an important role in the rescue of blocked DNA replication forks via replication fork reversal (RFR). RuvA specifically binds to HJ cruciform DNA, conferring on it an open structure. The RuvB hexamer acts as an ATP-dependent pump, pulling dsDNA into and through the RuvAB complex. HJ branch migration allows RuvC to scan DNA until it finds its consensus sequence, where it cleaves and resolves the cruciform DNA. This is Holliday junction branch migration complex subunit RuvA from Methylorubrum extorquens (strain CM4 / NCIMB 13688) (Methylobacterium extorquens).